Consider the following 252-residue polypeptide: Imidazole glycerol phosphate synthase subunit HisF (252 aa).

Active-site residues include Asp-11 and Asp-130.

Belongs to the HisA/HisF family. As to quaternary structure, heterodimer of HisH and HisF.

It localises to the cytoplasm. The enzyme catalyses 5-[(5-phospho-1-deoxy-D-ribulos-1-ylimino)methylamino]-1-(5-phospho-beta-D-ribosyl)imidazole-4-carboxamide + L-glutamine = D-erythro-1-(imidazol-4-yl)glycerol 3-phosphate + 5-amino-1-(5-phospho-beta-D-ribosyl)imidazole-4-carboxamide + L-glutamate + H(+). It participates in amino-acid biosynthesis; L-histidine biosynthesis; L-histidine from 5-phospho-alpha-D-ribose 1-diphosphate: step 5/9. Its function is as follows. IGPS catalyzes the conversion of PRFAR and glutamine to IGP, AICAR and glutamate. The HisF subunit catalyzes the cyclization activity that produces IGP and AICAR from PRFAR using the ammonia provided by the HisH subunit. In Pelotomaculum thermopropionicum (strain DSM 13744 / JCM 10971 / SI), this protein is Imidazole glycerol phosphate synthase subunit HisF.